A 988-amino-acid chain; its full sequence is uncharacterized protein (988 aa).

An N-terminal signal peptide occupies residues 1-17 (MIRLVFLFLLVVLSVEL). A disordered region spans residues 111 to 176 (YQNPSTFPST…SKLNQKSSKS (66 aa)). Low complexity predominate over residues 114-140 (PSTFPSTTTASTTTSTTTMPPTYQTTT). N-linked (GlcNAc...) asparagine glycosylation is found at Asn247, Asn389, Asn529, and Asn601. A helical membrane pass occupies residues 690–710 (IMIFTIFSVLSALTCLMCMYL). N-linked (GlcNAc...) asparagine glycosylation is present at Asn720. 6 consecutive transmembrane segments (helical) span residues 721 to 741 (LTAV…AFII), 753 to 773 (LLFP…TVLI), 784 to 804 (VLIA…WLLL), 832 to 852 (MILL…IFAL), 864 to 884 (LMIS…LPLI), and 891 to 911 (TVMA…SHTG). The interval 966–988 (RSEDTLRRNTSLYGTEGYELPTP) is disordered. Asn974 carries N-linked (GlcNAc...) asparagine glycosylation.

The protein localises to the membrane. This is an uncharacterized protein from Caenorhabditis elegans.